Reading from the N-terminus, the 216-residue chain is RNA pyrophosphohydrolase (216 aa).

The 144-residue stretch at 6-149 folds into the Nudix hydrolase domain; that stretch reads GFRPNVGIIL…KRDVYQLALT (144 aa). The Nudix box motif lies at 38 to 59; sequence GGIKYGETPMQAMYRELHEETG.

It belongs to the Nudix hydrolase family. RppH subfamily. The cofactor is a divalent metal cation.

Its function is as follows. Accelerates the degradation of transcripts by removing pyrophosphate from the 5'-end of triphosphorylated RNA, leading to a more labile monophosphorylated state that can stimulate subsequent ribonuclease cleavage. This chain is RNA pyrophosphohydrolase, found in Burkholderia ambifaria (strain MC40-6).